A 77-amino-acid chain; its full sequence is uncharacterized protein (77 aa).

Residues 49–71 (LVIASLILAIILLGILYYISYQM) traverse the membrane as a helical segment.

The protein localises to the membrane. This is an uncharacterized protein from Archaeoglobus fulgidus (strain ATCC 49558 / DSM 4304 / JCM 9628 / NBRC 100126 / VC-16).